Consider the following 397-residue polypeptide: Inositol 3-kinase (397 aa).

ATP contacts are provided by residues serine 228, 278-281 (GAGD), and asparagine 305. Aspartate 281 acts as the Proton acceptor in catalysis.

Belongs to the carbohydrate kinase pfkB family. As to expression, expressed in roots, leaf blade shoots, leaf sheath shoots and panicles.

It catalyses the reaction myo-inositol + ATP = 1D-myo-inositol 3-phosphate + ADP + H(+). Its function is as follows. Kinase that phosphorylates myo-inositol to produce multiple myo-inositol monophosphates. Participates in phytic acid biosynthesis in developing seeds. Phytic acid is the primary storage form of phosphorus in cereal grains and other plant seeds. The polypeptide is Inositol 3-kinase (Oryza sativa subsp. japonica (Rice)).